Reading from the N-terminus, the 214-residue chain is tRNA (guanine-N(7)-)-methyltransferase (214 aa).

S-adenosyl-L-methionine contacts are provided by E45, E70, D97, and D119. Residue D119 is part of the active site. Residues K123, D155, and 192–195 (TEYE) contribute to the substrate site.

Belongs to the class I-like SAM-binding methyltransferase superfamily. TrmB family.

It carries out the reaction guanosine(46) in tRNA + S-adenosyl-L-methionine = N(7)-methylguanosine(46) in tRNA + S-adenosyl-L-homocysteine. The protein operates within tRNA modification; N(7)-methylguanine-tRNA biosynthesis. Catalyzes the formation of N(7)-methylguanine at position 46 (m7G46) in tRNA. This chain is tRNA (guanine-N(7)-)-methyltransferase, found in Clostridioides difficile (strain 630) (Peptoclostridium difficile).